Here is a 66-residue protein sequence, read N- to C-terminus: Large ribosomal subunit protein bL35 (66 aa).

This sequence belongs to the bacterial ribosomal protein bL35 family.

This is Large ribosomal subunit protein bL35 from Afipia carboxidovorans (strain ATCC 49405 / DSM 1227 / KCTC 32145 / OM5) (Oligotropha carboxidovorans).